The following is a 380-amino-acid chain: Chaperone protein DnaJ (380 aa).

A J domain is found at 5 to 69 (DFYEVLGVGR…QKKAAYDQYG (65 aa)). A CR-type zinc finger spans residues 135 to 213 (GCSKEIRVPT…CHGQGRVEKT (79 aa)). C148, C151, C165, C168, C187, C190, C201, and C204 together coordinate Zn(2+). 4 CXXCXGXG motif repeats span residues 148-155 (CDSCDGSG), 165-172 (CGTCHGQG), 187-194 (CPHCHGRG), and 201-208 (CNSCHGQG).

It belongs to the DnaJ family. In terms of assembly, homodimer. The cofactor is Zn(2+).

It is found in the cytoplasm. In terms of biological role, participates actively in the response to hyperosmotic and heat shock by preventing the aggregation of stress-denatured proteins and by disaggregating proteins, also in an autonomous, DnaK-independent fashion. Unfolded proteins bind initially to DnaJ; upon interaction with the DnaJ-bound protein, DnaK hydrolyzes its bound ATP, resulting in the formation of a stable complex. GrpE releases ADP from DnaK; ATP binding to DnaK triggers the release of the substrate protein, thus completing the reaction cycle. Several rounds of ATP-dependent interactions between DnaJ, DnaK and GrpE are required for fully efficient folding. Also involved, together with DnaK and GrpE, in the DNA replication of plasmids through activation of initiation proteins. This is Chaperone protein DnaJ from Photobacterium profundum (strain SS9).